A 120-amino-acid polypeptide reads, in one-letter code: Chaperonin GroEL (120 aa).

Residue 23–27 (DGTTT) coordinates ATP.

The protein belongs to the chaperonin (HSP60) family. Forms a cylinder of 14 subunits composed of two heptameric rings stacked back-to-back. Interacts with the co-chaperonin GroES.

It is found in the cytoplasm. The enzyme catalyses ATP + H2O + a folded polypeptide = ADP + phosphate + an unfolded polypeptide.. Together with its co-chaperonin GroES, plays an essential role in assisting protein folding. The GroEL-GroES system forms a nano-cage that allows encapsulation of the non-native substrate proteins and provides a physical environment optimized to promote and accelerate protein folding. The sequence is that of Chaperonin GroEL from Mycobacterium gordonae.